We begin with the raw amino-acid sequence, 400 residues long: Tryptophan synthase beta chain (400 aa).

Lys92 carries the post-translational modification N6-(pyridoxal phosphate)lysine.

Belongs to the TrpB family. As to quaternary structure, tetramer of two alpha and two beta chains. The cofactor is pyridoxal 5'-phosphate.

It catalyses the reaction (1S,2R)-1-C-(indol-3-yl)glycerol 3-phosphate + L-serine = D-glyceraldehyde 3-phosphate + L-tryptophan + H2O. It participates in amino-acid biosynthesis; L-tryptophan biosynthesis; L-tryptophan from chorismate: step 5/5. Its function is as follows. The beta subunit is responsible for the synthesis of L-tryptophan from indole and L-serine. The chain is Tryptophan synthase beta chain from Neisseria meningitidis serogroup A / serotype 4A (strain DSM 15465 / Z2491).